Here is a 515-residue protein sequence, read N- to C-terminus: ATP synthase subunit alpha (515 aa).

An ATP-binding site is contributed by 171–178; the sequence is GDRQTGKT.

It belongs to the ATPase alpha/beta chains family. In terms of assembly, F-type ATPases have 2 components, CF(1) - the catalytic core - and CF(0) - the membrane proton channel. CF(1) has five subunits: alpha(3), beta(3), gamma(1), delta(1), epsilon(1). CF(0) has three main subunits: a(1), b(2) and c(9-12). The alpha and beta chains form an alternating ring which encloses part of the gamma chain. CF(1) is attached to CF(0) by a central stalk formed by the gamma and epsilon chains, while a peripheral stalk is formed by the delta and b chains.

It is found in the cell inner membrane. The catalysed reaction is ATP + H2O + 4 H(+)(in) = ADP + phosphate + 5 H(+)(out). Functionally, produces ATP from ADP in the presence of a proton gradient across the membrane. The alpha chain is a regulatory subunit. The polypeptide is ATP synthase subunit alpha (Xanthomonas axonopodis pv. citri (strain 306)).